Reading from the N-terminus, the 390-residue chain is Argininosuccinate synthase (390 aa).

Residue 6–14 (SYSGGLDTT) coordinates ATP. Tyrosine 83 lines the L-citrulline pocket. Position 113 (glycine 113) interacts with ATP. L-aspartate-binding residues include threonine 115, asparagine 119, and aspartate 120. Asparagine 119 is a binding site for L-citrulline. L-citrulline-binding residues include arginine 123, serine 169, serine 178, glutamate 254, and tyrosine 266.

The protein belongs to the argininosuccinate synthase family. Type 1 subfamily. In terms of assembly, homotetramer.

Its subcellular location is the cytoplasm. The catalysed reaction is L-citrulline + L-aspartate + ATP = 2-(N(omega)-L-arginino)succinate + AMP + diphosphate + H(+). It participates in amino-acid biosynthesis; L-arginine biosynthesis; L-arginine from L-ornithine and carbamoyl phosphate: step 2/3. This chain is Argininosuccinate synthase, found in Archaeoglobus fulgidus (strain ATCC 49558 / DSM 4304 / JCM 9628 / NBRC 100126 / VC-16).